Here is a 222-residue protein sequence, read N- to C-terminus: Uracil-DNA glycosylase (222 aa).

Asp-66 serves as the catalytic Proton acceptor.

This sequence belongs to the uracil-DNA glycosylase (UDG) superfamily. UNG family.

The protein resides in the cytoplasm. It carries out the reaction Hydrolyzes single-stranded DNA or mismatched double-stranded DNA and polynucleotides, releasing free uracil.. In terms of biological role, excises uracil residues from the DNA which can arise as a result of misincorporation of dUMP residues by DNA polymerase or due to deamination of cytosine. This is Uracil-DNA glycosylase from Porphyromonas gingivalis (strain ATCC BAA-308 / W83).